The primary structure comprises 67 residues: Probable Sec-independent protein translocase protein TatE (67 aa).

The helical transmembrane segment at 4-21 threads the bilayer; it reads ISITKLLVIAALVVLLFG.

The protein belongs to the TatA/E family. TatE subfamily.

The protein localises to the cell inner membrane. Its function is as follows. Part of the twin-arginine translocation (Tat) system that transports large folded proteins containing a characteristic twin-arginine motif in their signal peptide across membranes. TatE shares overlapping functions with TatA. The chain is Probable Sec-independent protein translocase protein TatE from Citrobacter rodentium (strain ICC168) (Citrobacter freundii biotype 4280).